The sequence spans 352 residues: PhoH-like protein (352 aa).

The disordered stretch occupies residues 1–21 (MTSRETRAADAAGARQADAQV). The segment covering 9 to 20 (ADAAGARQADAQ) has biased composition (low complexity). ATP is bound at residue 150–157 (GPAGTGKT).

The protein belongs to the PhoH family.

The protein localises to the cytoplasm. The sequence is that of PhoH-like protein from Mycobacterium bovis (strain ATCC BAA-935 / AF2122/97).